Here is an 804-residue protein sequence, read N- to C-terminus: MQLAVLTLALCWAYPVTIYISYLLSRLGIALYRKHKDSTTGAWYEKHRKAAFTAIFWLQLVQCFDLAISITITGYAMNISPQVEAWWVDKEFLASNIAVFMFLAAGLLPDPDVPFSPSLSHSHAWIAGIIMEALQLAMFCNQQSPVSVLSRVEYLQLGLVMVRLVLFVAMVALYFQPMYAWSRIQLDETEPLLGEVDSKPVRDAQHGGWLDYVVGFSTLFPFLWPSDSRRLQLRAIFCFVLLVIQRVVNILVPHQLGIVVAHLGSGTIPYQKIAIYIALRALQGQQGVIGSIRALLWIPVSQSTYRRLTSSAFEHVLSLSLEFHLGKRIGEVMSALSKGSALNTFLDGLVFQLFPMVADLWIAALYFLIQFDAFYSLIVITVTWLYLFVTIYMAKYRGRARREMVNREREMEAAKTDALMSYETVHHNSAVPHEINRFNRLVQAFQKAEYFVFFSLNLLNATQNLLFTAGVAIVCLLCAYQISADMQQVAMFVTLLTYLAQLQAPLNFFGSFYTQVQNNLVDAERMLALFKEKPLVQDRDGAIDLNTCAGRVEFTHVNFAYDERRPALQDVSFTVEPGTSTAIVGESGSGKSTILKLLFRFYDVAAGSVRFDGVDARDMTIASLRSHLGVVPQDTILFNDTLLYNLLYARPQATMEEVYAACRAASIHDRIMSFPDGYETKVGERGLRLSGGEKQRIAIARTFLRSPQILLLDEATASLDSQTERQIQGALDNIAKGRTTITIAHRLSTITKANQIIVLHQGRIVEKGTHEELLAANGMYSQMWAKQTKAKEKKDSNATLVEVA.

Transmembrane regions (helical) follow at residues 3–23, 52–72, 97–117, 119–139, 155–175, 206–226, 239–259, 349–369, and 373–393; these read LAVL…ISYL, FTAI…SITI, IAVF…PFSP, LSHS…LAMF, LQLG…ALYF, HGGW…LWPS, FVLL…LGIV, LVFQ…YFLI, and AFYS…TIYM. The ABC transmembrane type-1 domain maps to 236–518; the sequence is IFCFVLLVIQ…FGSFYTQVQN (283 aa). A glycan (N-linked (GlcNAc...) asparagine) is linked at asparagine 460. A run of 2 helical transmembrane segments spans residues 464-484 and 489-509; these read NLLF…QISA and VAMF…LNFF. The ABC transporter domain occupies 552 to 786; sequence VEFTHVNFAY…NGMYSQMWAK (235 aa). 585-592 serves as a coordination point for ATP; sequence GESGSGKS. N-linked (GlcNAc...) asparagine glycans are attached at residues asparagine 639 and asparagine 797.

The protein belongs to the ABC transporter superfamily. ABCB family. Heavy Metal importer (TC 3.A.1.210) subfamily.

Its subcellular location is the membrane. In terms of biological role, ABC transporter; part of the gene cluster that mediates the biosynthesis of aspirochlorine (or antibiotic A30641), an unusual halogenated spiro compound with distinctive antifungal properties due to selective inhibition of protein biosynthesis, and which is also active against bacteria, viruses, and murine tumor cells. The chain is ABC transporter aclQ from Aspergillus oryzae (strain ATCC 42149 / RIB 40) (Yellow koji mold).